Reading from the N-terminus, the 421-residue chain is Medium-chain specific acyl-CoA dehydrogenase, mitochondrial (421 aa).

Residues 1–25 (MAAGFGRCCRVLRSISRFQWRSQHT) constitute a mitochondrion transit peptide. Lys69 is subject to N6-acetyllysine; alternate. Lys69 carries the N6-succinyllysine; alternate modification. An FAD-binding site is contributed by 158–167 (YCVTEPGAGS). Ser167 is an octanoyl-CoA binding site. Position 179 is an N6-succinyllysine (Lys179). 191-193 (WIT) is a binding site for FAD. N6-acetyllysine; alternate is present on residues Lys212, Lys217, and Lys271. An N6-succinyllysine; alternate mark is found at Lys212, Lys217, and Lys271. Position 278 (Asp278) interacts with octanoyl-CoA. The residue at position 279 (Lys279) is an N6-acetyllysine. Arg281 lines the octanoyl-CoA pocket. The residue at position 301 (Lys301) is an N6-acetyllysine. Residues 306–308 (RKT) and 316–317 (HQ) each bind FAD. Octanoyl-CoA contacts are provided by Arg349 and Thr351. Thr351 is subject to Phosphothreonine. 374–378 (QILGG) lines the FAD pocket. Glu401 serves as a coordination point for octanoyl-CoA. Glu401 serves as the catalytic Proton acceptor. An FAD-binding site is contributed by 402-405 (GTSQ).

Belongs to the acyl-CoA dehydrogenase family. In terms of assembly, homotetramer. Interacts with the heterodimeric electron transfer flavoprotein ETF. Requires FAD as cofactor. Post-translationally, acetylated. Could occur at proximity of the cofactor-binding sites and reduce the catalytic activity. Could be deacetylated by SIRT3.

It is found in the mitochondrion matrix. The catalysed reaction is a medium-chain 2,3-saturated fatty acyl-CoA + oxidized [electron-transfer flavoprotein] + H(+) = a medium-chain (2E)-enoyl-CoA + reduced [electron-transfer flavoprotein]. It carries out the reaction pentanoyl-CoA + oxidized [electron-transfer flavoprotein] + H(+) = (2E)-pentenoyl-CoA + reduced [electron-transfer flavoprotein]. It catalyses the reaction hexanoyl-CoA + oxidized [electron-transfer flavoprotein] + H(+) = (2E)-hexenoyl-CoA + reduced [electron-transfer flavoprotein]. The enzyme catalyses octanoyl-CoA + oxidized [electron-transfer flavoprotein] + H(+) = (2E)-octenoyl-CoA + reduced [electron-transfer flavoprotein]. The catalysed reaction is decanoyl-CoA + oxidized [electron-transfer flavoprotein] + H(+) = (2E)-decenoyl-CoA + reduced [electron-transfer flavoprotein]. It carries out the reaction dodecanoyl-CoA + oxidized [electron-transfer flavoprotein] + H(+) = (2E)-dodecenoyl-CoA + reduced [electron-transfer flavoprotein]. It catalyses the reaction tetradecanoyl-CoA + oxidized [electron-transfer flavoprotein] + H(+) = (2E)-tetradecenoyl-CoA + reduced [electron-transfer flavoprotein]. The enzyme catalyses oxidized [electron-transfer flavoprotein] + hexadecanoyl-CoA + H(+) = (2E)-hexadecenoyl-CoA + reduced [electron-transfer flavoprotein]. It functions in the pathway lipid metabolism; mitochondrial fatty acid beta-oxidation. In terms of biological role, medium-chain specific acyl-CoA dehydrogenase is one of the acyl-CoA dehydrogenases that catalyze the first step of mitochondrial fatty acid beta-oxidation, an aerobic process breaking down fatty acids into acetyl-CoA and allowing the production of energy from fats. The first step of fatty acid beta-oxidation consists in the removal of one hydrogen from C-2 and C-3 of the straight-chain fatty acyl-CoA thioester, resulting in the formation of trans-2-enoyl-CoA. Electron transfer flavoprotein (ETF) is the electron acceptor that transfers electrons to the main mitochondrial respiratory chain via ETF-ubiquinone oxidoreductase (ETF dehydrogenase). Among the different mitochondrial acyl-CoA dehydrogenases, medium-chain specific acyl-CoA dehydrogenase acts specifically on acyl-CoAs with saturated 6 to 12 carbons long primary chains. The chain is Medium-chain specific acyl-CoA dehydrogenase, mitochondrial from Pan troglodytes (Chimpanzee).